Here is a 57-residue protein sequence, read N- to C-terminus: Large ribosomal subunit protein bL32 (57 aa).

It belongs to the bacterial ribosomal protein bL32 family.

The sequence is that of Large ribosomal subunit protein bL32 from Corynebacterium glutamicum (strain R).